We begin with the raw amino-acid sequence, 517 residues long: GMP synthase [glutamine-hydrolyzing] (517 aa).

Residues 11-202 enclose the Glutamine amidotransferase type-1 domain; the sequence is KIIALDFGSQ…AFDVCGAKAN (192 aa). Cys-88 acts as the Nucleophile in catalysis. Residues His-176 and Glu-178 contribute to the active site. One can recognise a GMPS ATP-PPase domain in the interval 203–392; the sequence is WTMDDFIDMQ…LGIPHELVWR (190 aa). Residue 230-236 participates in ATP binding; the sequence is SGGVDSS.

Homodimer.

The enzyme catalyses XMP + L-glutamine + ATP + H2O = GMP + L-glutamate + AMP + diphosphate + 2 H(+). It functions in the pathway purine metabolism; GMP biosynthesis; GMP from XMP (L-Gln route): step 1/1. Catalyzes the synthesis of GMP from XMP. The sequence is that of GMP synthase [glutamine-hydrolyzing] from Limosilactobacillus reuteri (strain DSM 20016) (Lactobacillus reuteri).